A 428-amino-acid chain; its full sequence is Histidinol dehydrogenase homolog (428 aa).

Positions 250 and 253 each coordinate Zn(2+). Catalysis depends on proton acceptor residues Glu320 and His321. Zn(2+)-binding residues include Asp354 and His413.

Belongs to the histidinol dehydrogenase family. The cofactor is Zn(2+).

This chain is Histidinol dehydrogenase homolog, found in Pelagibacter ubique (strain HTCC1062).